A 55-amino-acid chain; its full sequence is Large ribosomal subunit protein bL33 (55 aa).

This sequence belongs to the bacterial ribosomal protein bL33 family.

The polypeptide is Large ribosomal subunit protein bL33 (Bordetella pertussis (strain Tohama I / ATCC BAA-589 / NCTC 13251)).